Here is a 1050-residue protein sequence, read N- to C-terminus: Ankyrin repeat domain-containing protein 27 (1050 aa).

Positions 1–372 (MALYDEDLLK…RQGSLSAKPP (372 aa)) are sufficient for GEF activity towards RAB21. Positions 233 to 371 (ASEDAAFNKI…IRQGSLSAKP (139 aa)) constitute a VPS9 domain. 6 ANK repeats span residues 396 to 426 (SPTD…DKDA), 462 to 491 (RGHT…VVNA), 495 to 524 (HGAT…SAEV), 528 to 560 (NGNT…RLDI), 564 to 593 (KGDT…SPEI), and 597 to 627 (LKET…RQKS). Residues 396–460 (SPTDCLFKHI…PSVVTPFSRD (65 aa)) are sufficient for interaction with VPS29. The segment at 451 to 600 (PSVVTPFSRD…PEIQNRLKET (150 aa)) is interaction with RAB38. An interaction with RAB32 region spans residues 451 to 730 (PSVVTPFSRD…APAQKRLAKV (280 aa)). A disordered region spans residues 630 to 665 (APVQSLQRSVDSISQESSTSSFSSMSAGSRQEETKK). Positions 638–658 (SVDSISQESSTSSFSSMSAGS) are enriched in low complexity. The required for interaction with VAMP7 stretch occupies residues 658 to 707 (SRQEETKKDYREVEKLLRAVADGDLEMVRYLLEWTEEDLEDAEDTVSAVD). ANK repeat units follow at residues 668 to 698 (REVE…DLED), 743 to 772 (DGSS…NAGA), 776 to 805 (DQAV…KPNK), 809 to 838 (SGNT…AINT), and 842 to 871 (KGNT…SVQV). The tract at residues 692 to 746 (TEEDLEDAEDTVSAVDPEFCHPLCQCPKCAPAQKRLAKVPASGLGVNVTSQDGSS) is sufficient for interaction with VPS29. Phosphoserine occurs at positions 962 and 970. Residues 987 to 1050 (PAQSGSHAAE…TPQEVSASRS (64 aa)) are disordered. Over residues 994 to 1007 (AAEKGNSDWPERPR) the composition is skewed to basic and acidic residues. The residue at position 1023 (Thr1023) is a Phosphothreonine. The segment covering 1040–1050 (STPQEVSASRS) has biased composition (polar residues).

As to quaternary structure, interacts with RAB21 (GDP-bound form), VPS29, KIF5A, KIF5C, GOLGA4. Interacts with RAB32 (GTP-bound form), RAB38 (GTP-bound form), VAMP7. Interacts with low affinity with RAB5. ANKRD27:RAB32 heterodimers can homodimerize to form tetramers. Can interact with RAB38 or RAB32, VPS29 and VAMP7 simultaneously. A decreased interaction with RAB32 seen in the presence of SGSM2.

It is found in the early endosome. The protein localises to the late endosome. It localises to the cytoplasmic vesicle membrane. Its subcellular location is the lysosome. The protein resides in the cell membrane. It is found in the melanosome. In terms of biological role, may be a guanine exchange factor (GEF) for Rab21, Rab32 and Rab38 and regulate endosome dynamics. May regulate the participation of VAMP7 in membrane fusion events; in vitro inhibits VAMP7-mediated SNARE complex formation by trapping VAMP7 in a closed, fusogenically inactive conformation. Involved in peripheral melanosomal distribution of TYRP1 in melanocytes; the function, which probably is implicating vesicle-trafficking, includes cooperation with Rab32, Rab38 and VAMP7. Involved in the regulation of neurite growth; the function seems to require its GEF activity, probably towards Rab21, and VAMP7 but not Rab32/38. Proposed to be involved in Golgi sorting of VAMP7 and transport of VAMP7 vesicles to the cell surface; the function seems to implicate kinesin heavy chain isoform 5 proteins, GOLGA4, RAB21 and MACF1. Required for the colocalization of VAMP7 and Rab21, probably on TGN sites. Involved in GLUT1 endosome-to-plasma membrane trafficking; the function is dependent of association with VPS29. Regulates the proper trafficking of melanogenic enzymes TYR, TYRP1 and DCT/TYRP2 to melanosomes in melanocytes. In Pongo abelii (Sumatran orangutan), this protein is Ankyrin repeat domain-containing protein 27 (ANKRD27).